Reading from the N-terminus, the 426-residue chain is Serine hydroxymethyltransferase (426 aa).

(6S)-5,6,7,8-tetrahydrofolate contacts are provided by residues Leu-121 and Gly-125–Leu-127. Position 230 is an N6-(pyridoxal phosphate)lysine (Lys-230). A (6S)-5,6,7,8-tetrahydrofolate-binding site is contributed by Ser-354–Phe-356.

The protein belongs to the SHMT family. As to quaternary structure, homodimer. It depends on pyridoxal 5'-phosphate as a cofactor.

Its subcellular location is the cytoplasm. The catalysed reaction is (6R)-5,10-methylene-5,6,7,8-tetrahydrofolate + glycine + H2O = (6S)-5,6,7,8-tetrahydrofolate + L-serine. Its pathway is one-carbon metabolism; tetrahydrofolate interconversion. The protein operates within amino-acid biosynthesis; glycine biosynthesis; glycine from L-serine: step 1/1. Functionally, catalyzes the reversible interconversion of serine and glycine with tetrahydrofolate (THF) serving as the one-carbon carrier. This reaction serves as the major source of one-carbon groups required for the biosynthesis of purines, thymidylate, methionine, and other important biomolecules. Also exhibits THF-independent aldolase activity toward beta-hydroxyamino acids, producing glycine and aldehydes, via a retro-aldol mechanism. In Acaryochloris marina (strain MBIC 11017), this protein is Serine hydroxymethyltransferase.